Consider the following 190-residue polypeptide: GTP cyclohydrolase 1 (190 aa).

C75, H78, and C146 together coordinate Zn(2+).

It belongs to the GTP cyclohydrolase I family. As to quaternary structure, toroid-shaped homodecamer, composed of two pentamers of five dimers.

It catalyses the reaction GTP + H2O = 7,8-dihydroneopterin 3'-triphosphate + formate + H(+). It functions in the pathway cofactor biosynthesis; 7,8-dihydroneopterin triphosphate biosynthesis; 7,8-dihydroneopterin triphosphate from GTP: step 1/1. The chain is GTP cyclohydrolase 1 from Campylobacter jejuni (strain RM1221).